Here is a 216-residue protein sequence, read N- to C-terminus: Large ribosomal subunit protein uL3 (216 aa).

At Gln-157 the chain carries N5-methylglutamine.

The protein belongs to the universal ribosomal protein uL3 family. As to quaternary structure, part of the 50S ribosomal subunit. Forms a cluster with proteins L14 and L19. Methylated by PrmB.

Its function is as follows. One of the primary rRNA binding proteins, it binds directly near the 3'-end of the 23S rRNA, where it nucleates assembly of the 50S subunit. The polypeptide is Large ribosomal subunit protein uL3 (Xanthomonas campestris pv. campestris (strain 8004)).